Here is a 126-residue protein sequence, read N- to C-terminus: Glycine cleavage system H protein (126 aa).

The region spanning 21 to 103 is the Lipoyl-binding domain; the sequence is TVTIGISEHA…YEGGWIVKVK (83 aa). K62 is modified (N6-lipoyllysine).

Belongs to the GcvH family. In terms of assembly, the glycine cleavage system is composed of four proteins: P, T, L and H. The cofactor is (R)-lipoate.

Its function is as follows. The glycine cleavage system catalyzes the degradation of glycine. The H protein shuttles the methylamine group of glycine from the P protein to the T protein. The protein is Glycine cleavage system H protein of Vibrio parahaemolyticus serotype O3:K6 (strain RIMD 2210633).